Consider the following 161-residue polypeptide: Spermidine N(1)-acetyltransferase (161 aa).

One can recognise an N-acetyltransferase domain in the interval 3-160; the sequence is IEIRKLSIED…SDFIMEKKYE (158 aa). Residues 92-94, 99-104, Asn-131, and Ser-136 each bind acetyl-CoA; these read LYL and THKKIG. Tyr-138 functions as the Proton donor in the catalytic mechanism. Residue Lys-140 participates in acetyl-CoA binding.

The protein belongs to the acetyltransferase family. As to quaternary structure, monomer or homodimer.

It catalyses the reaction an alkane-alpha,omega-diamine + acetyl-CoA = an N-acetylalkane-alpha,omega-diamine + CoA + H(+). Involved in the protection against polyamine toxicity by regulating their concentration. Could also be involved in the negative control of sporulation as well as production of degradative enzymes such as alpha-amylase, levansucrase and alkaline phosphatase. Catalyzes the transfer of an acetyl group from acetyl coenzyme A (AcCoA) to an acceptor substrate and release both CoA and the acetylated product. It can use a variety of substrates including spermidine, L-tryptophan, L-leucine, L-lysine, dopamine and tyramine. This chain is Spermidine N(1)-acetyltransferase, found in Thermoplasma acidophilum (strain ATCC 25905 / DSM 1728 / JCM 9062 / NBRC 15155 / AMRC-C165).